A 271-amino-acid polypeptide reads, in one-letter code: Serine protease SP24D (271 aa).

The N-terminal stretch at 1–22 (MTLADRVPLALAALAYLALVSG) is a signal peptide. Residues 23–49 (VRFHLSEQNDVLPGGSQARRPFFQGAR) constitute a propeptide, activation peptide. A Peptidase S1 domain is found at 50–269 (IVGGSVASEG…FVTWIQTTMR (220 aa)). A disulfide bridge links Cys75 with Cys91. Catalysis depends on charge relay system residues His90 and Asp136. 2 disulfide bridges follow: Cys199–Cys211 and Cys221–Cys246. Ser225 functions as the Charge relay system in the catalytic mechanism.

Belongs to the peptidase S1 family. In terms of tissue distribution, highest level of adult expression is in the thorax.

The protein is Serine protease SP24D (Sp24D) of Anopheles gambiae (African malaria mosquito).